We begin with the raw amino-acid sequence, 603 residues long: Polypeptide N-acetylgalactosaminyltransferase 10 (603 aa).

Topologically, residues 1 to 11 are cytoplasmic; sequence MRRKEKRLLQA. A helical; Signal-anchor for type II membrane protein transmembrane segment spans residues 12–31; the sequence is VALVLAALVLLPNVGLWALY. Topologically, residues 32 to 603 are lumenal; sequence RERQPDGTPG…STVLEKFNRN (572 aa). Residues 38–59 are disordered; sequence GTPGGSGAAVAPAAGQGSHSRQ. Residues 45–55 are compositionally biased toward low complexity; that stretch reads AAVAPAAGQGS. N-linked (GlcNAc...) asparagine glycosylation is found at Asn124 and Asn146. Intrachain disulfides connect Cys135–Cys365, Cys356–Cys432, Cys471–Cys488, Cys523–Cys538, and Cys563–Cys578. A catalytic subdomain A region spans residues 144 to 253; that stretch reads LPNTSIIIPF…VNWLPPLLDR (110 aa). Substrate contacts are provided by His154, Glu156, Asp185, and Arg214. Residue Asp237 participates in Mn(2+) binding. Residue Ser238 participates in substrate binding. His239 contacts Mn(2+). Positions 311–373 are catalytic subdomain B; that stretch reads PFESPVMAGG…PCSRVGHIYR (63 aa). Trp342 serves as a coordination point for substrate. Residue His370 participates in Mn(2+) binding. Substrate contacts are provided by Arg373 and Tyr378. Residues 373 to 384 form a flexible loop region; the sequence is RKYVPYKVPAGV. Residues 458–590 enclose the Ricin B-type lectin domain; it reads AAWGEIRNVG…SSLTQQWLFE (133 aa). An N-linked (GlcNAc...) asparagine glycan is attached at Asn593.

The protein belongs to the glycosyltransferase 2 family. GalNAc-T subfamily. Requires Mn(2+) as cofactor. As to expression, widely expressed. Expressed at high level in small intestine, and at intermediate levels in stomach, pancreas, ovary, thyroid gland and spleen. Weakly expressed in other tissues.

Its subcellular location is the golgi apparatus membrane. The catalysed reaction is L-seryl-[protein] + UDP-N-acetyl-alpha-D-galactosamine = a 3-O-[N-acetyl-alpha-D-galactosaminyl]-L-seryl-[protein] + UDP + H(+). It catalyses the reaction L-threonyl-[protein] + UDP-N-acetyl-alpha-D-galactosamine = a 3-O-[N-acetyl-alpha-D-galactosaminyl]-L-threonyl-[protein] + UDP + H(+). Its pathway is protein modification; protein glycosylation. Catalyzes the initial reaction in O-linked oligosaccharide biosynthesis, the transfer of an N-acetyl-D-galactosamine residue to a serine or threonine residue on the protein receptor. Has activity toward Muc5Ac and EA2 peptide substrates. The sequence is that of Polypeptide N-acetylgalactosaminyltransferase 10 (GALNT10) from Homo sapiens (Human).